We begin with the raw amino-acid sequence, 1291 residues long: Histone-lysine N-methyltransferase SETDB1 (1291 aa).

The stretch at 18-64 (ESEEIAELQQAVVEELGISMEELRHFIDEELEKMDCVQQRKKQLAEL) forms a coiled coil. The segment at 108–147 (RDSSSEDESSRPTEIIEIPDEDDDVLSIDSGDAGSRTPKD) is disordered. 2 positions are modified to phosphoserine: serine 112 and serine 117. A Phosphothreonine modification is found at threonine 120. The span at 124 to 133 (EIPDEDDDVL) shows a compositional bias: acidic residues. Lysine 182 is covalently cross-linked (Glycyl lysine isopeptide (Lys-Gly) (interchain with G-Cter in SUMO2); alternate). Lysine 182 is covalently cross-linked (Glycyl lysine isopeptide (Lys-Gly) (interchain with G-Cter in ubiquitin); alternate). 2 consecutive Tudor domains span residues 257-320 (KLYV…LKKT) and 347-403 (LLKS…SMKT). Positions 404–545 (SSASALEKKQ…APAPSALPAP (142 aa)) are disordered. A compositionally biased stretch (polar residues) spans 433-444 (QYTQDLTGTGTQ). The span at 448-468 (VEPPQPTAPPAPPFPPAPPLS) shows a compositional bias: pro residues. A compositionally biased stretch (polar residues) spans 477-515 (ESQLAQSRKQVAKKSTSFRPGSVGSGHSSPTSPALSENV). The segment covering 528–539 (SPLGSTASAPAP) has biased composition (low complexity). The region spanning 594 to 665 (YRGKNPLLVP…EMFCLDPYVL (72 aa)) is the MBD domain. Residues 727–800 (VGCDCKDGCR…MCTNRLVQHG (74 aa)) enclose the Pre-SET domain. Cysteine 729, cysteine 731, cysteine 735, cysteine 741, cysteine 743, cysteine 781, cysteine 785, cysteine 787, and cysteine 792 together coordinate Zn(2+). The SET domain occupies 803–1266 (VRLQLFKTQN…AGTELTWDYN (464 aa)). S-adenosyl-L-methionine is bound by residues 813–815 (KGW), aspartate 851, and tyrosine 853. Lysine 867 participates in a covalent cross-link: Glycyl lysine isopeptide (Lys-Gly) (interchain with G-Cter in ubiquitin). The disordered stretch occupies residues 868-1160 (EGYESDAPCS…MTGPMKRQVA (293 aa)). The segment covering 896-907 (EDPEESNDDSSD) has biased composition (acidic residues). Positions 951 to 963 (DLGPPHIPVPPSI) are enriched in pro residues. Serine 1025 carries the post-translational modification Phosphoserine. Basic and acidic residues predominate over residues 1031 to 1050 (IKDEGDIKQAKKEDTDDRNK). Lysine 1032 is covalently cross-linked (Glycyl lysine isopeptide (Lys-Gly) (interchain with G-Cter in SUMO2); alternate). Lysine 1032 is covalently cross-linked (Glycyl lysine isopeptide (Lys-Gly) (interchain with G-Cter in SUMO1); alternate). Lysine 1038 is covalently cross-linked (Glycyl lysine isopeptide (Lys-Gly) (interchain with G-Cter in SUMO2)). Residues 1052 to 1063 (SVVTESSRNYGY) show a composition bias toward polar residues. At serine 1066 the chain carries Phosphoserine. Residue lysine 1069 forms a Glycyl lysine isopeptide (Lys-Gly) (interchain with G-Cter in SUMO2) linkage. Residues 1100-1115 (LTLSSSTESEGESGTS) are compositionally biased toward low complexity. The segment covering 1116–1140 (RKPTAGQTSATAVDSDDIQTISSGS) has biased composition (polar residues). Lysine 1149 participates in a covalent cross-link: Glycyl lysine isopeptide (Lys-Gly) (interchain with G-Cter in SUMO2). Lysine 1170 and lysine 1178 each carry N6,N6,N6-trimethyllysine; alternate. Lysine 1170 and lysine 1178 each carry N6,N6-dimethyllysine; alternate. S-adenosyl-L-methionine is bound by residues arginine 1220 and 1223-1224 (NH). The Zn(2+) site is built by cysteine 1226, cysteine 1279, cysteine 1281, and cysteine 1286. In terms of domain architecture, Post-SET spans 1275–1291 (KELLCCCGAIECRGRLL).

This sequence belongs to the class V-like SAM-binding methyltransferase superfamily. Histone-lysine methyltransferase family. Suvar3-9 subfamily. In terms of assembly, part of a complex containing at least CDYL, REST, WIZ, SETDB1, EHMT1 and EHMT2. Forms a complex with ATRX, TRIM28 and ZNF274. Probably part of a corepressor complex containing ZNF304, TRIM28, SETDB1 and DNMT1. Interacts with TRIM28/TIF1B. Interacts with ATF7IP and ATF7IP2; the interaction with ATF7IP protects SETDB1 from proteasomal degradation and is required to stimulate histone methyltransferase activity and facilitate the conversion of dimethylated to trimethylated H3 'Lys-9'. Interacts with CBX1 and CBX5. Interacts with DNMT3A and DNMT3B. Interacts with SUMO2. Interacts with MPHOSPH8. Interacts with ERG. Interacts with HDAC1, HDAC2, SIN3A and SIN3B. Interacts with ATRX. Interacts with RESF1. Interacts with ZNF638. Interacts with TASOR. Interacts with ZNF263; recruited to the SIX3 promoter along with other proteins involved in chromatin modification and transcriptional corepression where it contributes to transcriptional repression. Interacts with PHF13; the interaction probably enhances SETDB1 chromatin-associated levels and activity. Interacts with VRK1. Degraded by the proteasome, shielded by interaction with ATF7IP. In terms of processing, monoubiquitinated at Lys-867 by E2 enzymes of the UBE2E family. The conjugated-Ub is protected from deubiquitination by the SET domain. Monoubiquitination at Lys-867 is required for catalytic activity, H3K9 methylation and endogenous retrovirus silencing. Widely expressed. High expression in testis.

Its subcellular location is the nucleus. It localises to the cytoplasm. The protein resides in the chromosome. It carries out the reaction N(6),N(6)-dimethyl-L-lysyl(9)-[histone H3] + S-adenosyl-L-methionine = N(6),N(6),N(6)-trimethyl-L-lysyl(9)-[histone H3] + S-adenosyl-L-homocysteine + H(+). Functionally, histone methyltransferase that specifically trimethylates 'Lys-9' of histone H3. H3 'Lys-9' trimethylation represents a specific tag for epigenetic transcriptional repression by recruiting HP1 (CBX1, CBX3 and/or CBX5) proteins to methylated histones. Mainly functions in euchromatin regions, thereby playing a central role in the silencing of euchromatic genes. H3 'Lys-9' trimethylation is coordinated with DNA methylation. Required for HUSH-mediated heterochromatin formation and gene silencing. Forms a complex with MBD1 and ATF7IP that represses transcription and couples DNA methylation and histone 'Lys-9' trimethylation. Its activity is dependent on MBD1 and is heritably maintained through DNA replication by being recruited by CAF-1. SETDB1 is targeted to histone H3 by TRIM28/TIF1B, a factor recruited by KRAB zinc-finger proteins. Probably forms a corepressor complex required for activated KRAS-mediated promoter hypermethylation and transcriptional silencing of tumor suppressor genes (TSGs) or other tumor-related genes in colorectal cancer (CRC) cells. Required to maintain a transcriptionally repressive state of genes in undifferentiated embryonic stem cells (ESCs). In ESCs, in collaboration with TRIM28, is also required for H3K9me3 and silencing of endogenous and introduced retroviruses in a DNA-methylation independent-pathway. Associates at promoter regions of tumor suppressor genes (TSGs) leading to their gene silencing. The SETDB1-TRIM28-ZNF274 complex may play a role in recruiting ATRX to the 3'-exons of zinc-finger coding genes with atypical chromatin signatures to establish or maintain/protect H3K9me3 at these transcriptionally active regions. In Homo sapiens (Human), this protein is Histone-lysine N-methyltransferase SETDB1.